The chain runs to 66 residues: Large ribosomal subunit protein bL35 (66 aa).

The segment at 19-45 (SGKVVAAQSTKRHGMTKRSKRSLRTRR) is disordered. A compositionally biased stretch (basic residues) spans 28–45 (TKRHGMTKRSKRSLRTRR).

It belongs to the bacterial ribosomal protein bL35 family.

The sequence is that of Large ribosomal subunit protein bL35 from Anaplasma phagocytophilum (strain HZ).